Reading from the N-terminus, the 337-residue chain is Anthranilate phosphoribosyltransferase (337 aa).

5-phospho-alpha-D-ribose 1-diphosphate contacts are provided by residues Gly80, 83 to 84, Thr88, 90 to 93, 108 to 116, and Ser120; these read GD, NIST, and KHGNRAVSS. Residue Gly80 coordinates anthranilate. Mg(2+) is bound at residue Ser92. Asn111 is an anthranilate binding site. Arg166 contributes to the anthranilate binding site. Residues Asp224 and Glu225 each coordinate Mg(2+).

The protein belongs to the anthranilate phosphoribosyltransferase family. Homodimer. It depends on Mg(2+) as a cofactor.

The catalysed reaction is N-(5-phospho-beta-D-ribosyl)anthranilate + diphosphate = 5-phospho-alpha-D-ribose 1-diphosphate + anthranilate. Its pathway is amino-acid biosynthesis; L-tryptophan biosynthesis; L-tryptophan from chorismate: step 2/5. Its function is as follows. Catalyzes the transfer of the phosphoribosyl group of 5-phosphorylribose-1-pyrophosphate (PRPP) to anthranilate to yield N-(5'-phosphoribosyl)-anthranilate (PRA). This Anaeromyxobacter dehalogenans (strain 2CP-C) protein is Anthranilate phosphoribosyltransferase.